The primary structure comprises 2211 residues: Nonribosomal peptide synthetase 13 (2211 aa).

The segment at 76–475 (TYAELDSLSD…IEHHLQLTLP (400 aa)) is adenylation 1. In terms of domain architecture, Carrier 1 spans 594–671 (PPSTPKEATI…EQSKRAGLIQ (78 aa)). S631 bears the O-(pantetheine 4'-phosphoryl)serine mark. The segment at 710-975 (EDIYPCTALQ…IATVPTRIRV (266 aa)) is condensation 1. An adenylation 2 region spans residues 1169 to 1563 (TYRELWAHSS…LGAVEASVMR (395 aa)). Residues 1677–1756 (PMSDDNERRL…RSRHLITEQA (80 aa)) form the Carrier 2 domain. Position 1714 is an O-(pantetheine 4'-phosphoryl)serine (S1714). A condensation 2 region spans residues 1814-2069 (HFQFDLSGAV…CTNYIPYRLS (256 aa)).

The protein belongs to the NRP synthetase family.

The enzyme catalyses L-proline + L-tryptophan + 2 ATP = brevianamide F + 2 AMP + 2 diphosphate + 2 H(+). Its pathway is mycotoxin biosynthesis. In terms of biological role, nonribosomal peptide synthetase; part of the gene cluster that mediates the biosynthesis of fumitremorgins, indole alkaloids that carry not only intriguing chemical structures, but also interesting biological and pharmacological activities. The biosynthesis of fumitremorgin-type alkaloids begins by condensation of the two amino acids L-tryptophan and L-proline to brevianamide F, catalyzed by the non-ribosomal peptide synthetase ftmA. Brevianamide F is then prenylated by the prenyltransferase ftmPT1/ftmB in the presence of dimethylallyl diphosphate, resulting in the formation of tryprostatin B. The three cytochrome P450 monooxygenases, ftmP450-1/ftmC, ftmP450-2/ftmE and ftmP450-3/FtmG, are responsible for the conversion of tryprostatin B to 6-hydroxytryprostatin B, tryprostatin A to fumitremorgin C and fumitremorgin C to 12,13-dihydroxyfumitremorgin C, respectively. The putative methyltransferase ftmMT/ftmD is expected for the conversion of 6-hydroxytryprostatin B to tryprostatin A. FtmPT2/FtmH catalyzes the prenylation of 12,13-dihydroxyfumitre-morgin C in the presence of dimethylallyl diphosphate, resulting in the formation of fumitremorgin B. Fumitremorgin B is further converted to verruculogen by ftmOx1/ftmF via the insertion of an endoperoxide bond between the two prenyl moieties. In some fungal species, verruculogen is further converted to fumitremorgin A, but the enzymes involved in this step have not been identified yet. The sequence is that of Nonribosomal peptide synthetase 13 from Aspergillus fumigatus (Neosartorya fumigata).